The chain runs to 485 residues: Noelin (485 aa).

The N-terminal stretch at 1-24 (MSVPLLKIGVVLSTMAMITNWMSQ) is a signal peptide. N-linked (GlcNAc...) asparagine glycosylation is found at asparagine 33, asparagine 103, asparagine 187, asparagine 288, asparagine 307, asparagine 394, asparagine 431, and asparagine 473. The stretch at 87–225 (RDARTKQLRQ…ERLRACMQKL (139 aa)) forms a coiled coil. The Olfactomedin-like domain occupies 226 to 478 (ACGKLTGISD…QTLYNVTLFH (253 aa)). An intrachain disulfide couples cysteine 227 to cysteine 409.

Homotetramer; disulfide-linked. Dimer of dimers, giving rise to a V-shaped homotretramer. Isoform 1 and isoform 3 interact with RTN4R. Identified in a complex with RTN4R and LINGO1. Peripherally associated with AMPAR complex. AMPAR complex consists of an inner core made of 4 pore-forming GluA/GRIA proteins (GRIA1, GRIA2, GRIA3 and GRIA4) and 4 major auxiliary subunits arranged in a twofold symmetry. One of the two pairs of distinct binding sites is occupied either by CNIH2, CNIH3 or CACNG2, CACNG3. The other harbors CACNG2, CACNG3, CACNG4, CACNG8 or GSG1L. This inner core of AMPAR complex is complemented by outer core constituents binding directly to the GluA/GRIA proteins at sites distinct from the interaction sites of the inner core constituents. Outer core constituents include at least PRRT1, PRRT2, CKAMP44/SHISA9, FRRS1L and NRN1. The proteins of the inner and outer core serve as a platform for other, more peripherally associated AMPAR constituents, including OLFM1. Alone or in combination, these auxiliary subunits control the gating and pharmacology of the AMPAR complex and profoundly impact their biogenesis and protein processing. Interacts with OLFM2. In isoform 3 and isoform 4, the signal peptide is predicted to end in position 17. Expressed in the brain (at protein level). Expressed in the brain, predominantly in the cortex and hippocampus. In the pituitary only the two A-type and in the adrenal glands only the two B-type forms were detected.

Its subcellular location is the secreted. The protein resides in the synapse. The protein localises to the endoplasmic reticulum. It is found in the cell projection. It localises to the axon. Its subcellular location is the perikaryon. Contributes to the regulation of axonal growth in the embryonic and adult central nervous system by inhibiting interactions between RTN4R and LINGO1. Inhibits RTN4R-mediated axon growth cone collapse. May play an important role in regulating the production of neural crest cells by the neural tube. May be required for normal responses to olfactory stimuli. The chain is Noelin (Olfm1) from Rattus norvegicus (Rat).